Here is a 400-residue protein sequence, read N- to C-terminus: Dual specificity mitogen-activated protein kinase kinase 2 (400 aa).

Met-1 carries the post-translational modification N-acetylmethionine. Ser-23 carries the phosphoserine modification. The 298-residue stretch at 72–369 (FERISELGAG…LKLLTNHAFI (298 aa)) folds into the Protein kinase domain. Residues 78 to 86 (LGAGNGGVV) and Lys-101 contribute to the ATP site. Residue Asp-194 is the Proton acceptor of the active site. Residues Ser-222 and Ser-226 each carry the phosphoserine; by RAF modification. A disordered region spans residues 282-310 (PVVDGADGEPHSVSPRPRPPGRPISGHGM). Ser-293, Ser-295, and Ser-306 each carry phosphoserine. Thr-394 and Thr-396 each carry phosphothreonine.

The protein belongs to the protein kinase superfamily. STE Ser/Thr protein kinase family. MAP kinase kinase subfamily. Interacts with MORG1. Interacts with SGK1. Interacts with KSR1. Interacts with KSR1 and BRAF; the interaction with KSR1 mediates KSR1-BRAF dimerization. Interacts with GLS. Mg(2+) serves as cofactor. MAPKK is itself dependent on Ser/Thr phosphorylation for activity catalyzed by MAP kinase kinase kinases (RAF or MEKK1). Phosphorylated by MAP2K1/MEK1. As to expression, expressed abundantly in the adult brain and muscle.

Its subcellular location is the cytoplasm. The protein localises to the membrane. It catalyses the reaction L-seryl-[protein] + ATP = O-phospho-L-seryl-[protein] + ADP + H(+). The enzyme catalyses L-threonyl-[protein] + ATP = O-phospho-L-threonyl-[protein] + ADP + H(+). The catalysed reaction is L-tyrosyl-[protein] + ATP = O-phospho-L-tyrosyl-[protein] + ADP + H(+). Functionally, catalyzes the concomitant phosphorylation of a threonine and a tyrosine residue in a Thr-Glu-Tyr sequence located in MAP kinases. Activates the ERK1 and ERK2 MAP kinases. Activates BRAF in a KSR1 or KSR2-dependent manner; by binding to KSR1 or KSR2 releases the inhibitory intramolecular interaction between KSR1 or KSR2 protein kinase and N-terminal domains which promotes KSR1 or KSR2-BRAF dimerization and BRAF activation. The sequence is that of Dual specificity mitogen-activated protein kinase kinase 2 (Map2k2) from Rattus norvegicus (Rat).